The sequence spans 181 residues: Mitochondrial pyruvate carrier-like protein (181 aa).

Transmembrane regions (helical) follow at residues 23-42 (YLAS…PLAA) and 52-74 (IISG…FAYR). Residues 125-154 (TGSVDSSATSTGSVDSSATSTGSVDSSAAT) form a disordered region.

Belongs to the mitochondrial pyruvate carrier (MPC) (TC 2.A.105) family.

Its subcellular location is the mitochondrion inner membrane. In terms of biological role, may mediate the uptake of pyruvate into mitochondria. In Bos taurus (Bovine), this protein is Mitochondrial pyruvate carrier-like protein.